We begin with the raw amino-acid sequence, 132 residues long: Small ribosomal subunit protein uS8 (132 aa).

This sequence belongs to the universal ribosomal protein uS8 family. As to quaternary structure, part of the 30S ribosomal subunit. Contacts proteins S5 and S12.

One of the primary rRNA binding proteins, it binds directly to 16S rRNA central domain where it helps coordinate assembly of the platform of the 30S subunit. The chain is Small ribosomal subunit protein uS8 from Lacticaseibacillus casei (strain BL23) (Lactobacillus casei).